Here is a 305-residue protein sequence, read N- to C-terminus: Beta-carotene 3-hydroxylase, chloroplastic (305 aa).

Residues 1-41 (MAFAMSSSLTLFQYQSFGKKPFFSRRRDFAGCSMMNPLVAR) constitute a chloroplast transit peptide. 2 helical membrane passes run 98–118 (YLVA…AAVY) and 129–149 (AVPL…AVGM). The 127-residue stretch at 146 to 272 (AVGMEYWARW…KFNGVPYGLF (127 aa)) folds into the Fatty acid hydroxylase domain. The Histidine box-1 signature appears at 157–162 (HRALWH). The short motif at 169–173 (HESHH) is the Histidine box-2 element. 2 helical membrane passes run 184 to 204 (DVFA…GFFH) and 207 to 227 (FFSG…MAYM). Residues 230-235 (HDGLVH) carry the Histidine box-3 motif. A Histidine box-4 motif is present at residues 256–260 (HQIHH).

It belongs to the sterol desaturase family. As to quaternary structure, homodimer. As to expression, expressed in flower buds and lips. Detected in roots and leaves.

The protein localises to the plastid. It localises to the chloroplast membrane. It catalyses the reaction all-trans-beta-carotene + 4 reduced [2Fe-2S]-[ferredoxin] + 2 O2 + 4 H(+) = all-trans-zeaxanthin + 4 oxidized [2Fe-2S]-[ferredoxin] + 2 H2O. Its function is as follows. Nonheme diiron monooxygenase involved in the biosynthesis of xanthophylls. Specific for beta-ring hydroxylations of beta-carotene. Uses ferredoxin as an electron donor. In Oncidium hybrid cultivar (Orchid), this protein is Beta-carotene 3-hydroxylase, chloroplastic (BHY).